Consider the following 448-residue polypeptide: Probable glycine dehydrogenase (decarboxylating) subunit 1 (448 aa).

Belongs to the GcvP family. N-terminal subunit subfamily. In terms of assembly, the glycine cleavage system is composed of four proteins: P, T, L and H. In this organism, the P 'protein' is a heterodimer of two subunits.

It catalyses the reaction N(6)-[(R)-lipoyl]-L-lysyl-[glycine-cleavage complex H protein] + glycine + H(+) = N(6)-[(R)-S(8)-aminomethyldihydrolipoyl]-L-lysyl-[glycine-cleavage complex H protein] + CO2. Functionally, the glycine cleavage system catalyzes the degradation of glycine. The P protein binds the alpha-amino group of glycine through its pyridoxal phosphate cofactor; CO(2) is released and the remaining methylamine moiety is then transferred to the lipoamide cofactor of the H protein. In Staphylococcus epidermidis (strain ATCC 35984 / DSM 28319 / BCRC 17069 / CCUG 31568 / BM 3577 / RP62A), this protein is Probable glycine dehydrogenase (decarboxylating) subunit 1.